The following is a 923-amino-acid chain: Protocadherin gamma-B5 (923 aa).

The first 30 residues, 1–30, serve as a signal peptide directing secretion; it reads MGRGTGELGRAERLPVLFLFLLSLFCPALC. Cadherin domains follow at residues 31–133, 134–242, 243–343, 344–448, 449–558, and 566–671; these read EQIR…TPKF, TQNS…PPVF, NRDV…SPEV, TFHS…APVF, HQAS…APRV, and DGSA…LPDI. Residues 31–687 lie on the Extracellular side of the membrane; that stretch reads EQIRYRIPEE…SDPQAELQFY (657 aa). N-linked (GlcNAc...) asparagine glycans are attached at residues N415 and N541. The chain crosses the membrane as a helical span at residues 688–708; it reads LVVALALISVLFLLAVILAIA. Topologically, residues 709–923 are cytoplasmic; sequence LRLRRSSSPA…KKKSGKKEKK (215 aa). 2 disordered regions span residues 794–832 and 893–923; these read TSHP…WPNN and ATLT…KEKK. A compositionally biased stretch (polar residues) spans 807-832; that stretch reads WRFSQAQRPGTSGSQNGDDTGTWPNN. Basic residues predominate over residues 913–923; sequence NKKKSGKKEKK.

The protein localises to the cell membrane. Its function is as follows. Potential calcium-dependent cell-adhesion protein. May be involved in the establishment and maintenance of specific neuronal connections in the brain. In Pan troglodytes (Chimpanzee), this protein is Protocadherin gamma-B5 (PCDHGB5).